A 200-amino-acid polypeptide reads, in one-letter code: dITP/XTP pyrophosphatase (200 aa).

8–13 (TGNQGK) provides a ligand contact to substrate. Asp-69 acts as the Proton acceptor in catalysis. Asp-69 provides a ligand contact to Mg(2+). Residues Ser-70, 154–157 (FGYD), Lys-177, and 182–183 (HR) each bind substrate.

Belongs to the HAM1 NTPase family. In terms of assembly, homodimer. Mg(2+) is required as a cofactor.

The enzyme catalyses XTP + H2O = XMP + diphosphate + H(+). It catalyses the reaction dITP + H2O = dIMP + diphosphate + H(+). It carries out the reaction ITP + H2O = IMP + diphosphate + H(+). Its function is as follows. Pyrophosphatase that catalyzes the hydrolysis of nucleoside triphosphates to their monophosphate derivatives, with a high preference for the non-canonical purine nucleotides XTP (xanthosine triphosphate), dITP (deoxyinosine triphosphate) and ITP. Seems to function as a house-cleaning enzyme that removes non-canonical purine nucleotides from the nucleotide pool, thus preventing their incorporation into DNA/RNA and avoiding chromosomal lesions. The sequence is that of dITP/XTP pyrophosphatase from Vibrio parahaemolyticus serotype O3:K6 (strain RIMD 2210633).